Here is a 210-residue protein sequence, read N- to C-terminus: Protein GET1 (210 aa).

Residues 1 to 4 (MASL) lie on the Lumenal side of the membrane. Residues 5–24 (LIIVFLSHVVTYLINTIGAT) form a helical membrane-spanning segment. At 25–110 (TVDNLLWLLY…SFDLTVKSVR (86 aa)) the chain is on the cytoplasmic side. The stretch at 43-97 (RTAVEQRRLKGEVVQLKREMKSTSSQDEFAKWAKLRRRHDKAMEEYEAKNKALGK) forms a coiled coil. The helical transmembrane segment at 111-131 (FFSTTGLKFFLQFWYSKTPMF) threads the bilayer. Topologically, residues 132–155 (ELPRGWVPWQVEWVLSFPRAPLGT) are lumenal. Residues 156–172 (VSIQVWSGVCTTVVSLA) form a helical membrane-spanning segment. The Cytoplasmic portion of the chain corresponds to 173–210 (GDALGVVIQSLILKMTKRGVARTSEGRPSQPMALKKEL).

This sequence belongs to the WRB/GET1 family. Interacts with GET3.

The protein resides in the endoplasmic reticulum membrane. Required for the post-translational delivery of tail-anchored (TA) proteins to the endoplasmic reticulum. Acts as a membrane receptor for soluble GET3, which recognizes and selectively binds the transmembrane domain of TA proteins in the cytosol. The protein is Protein GET1 of Uncinocarpus reesii (strain UAMH 1704).